A 1208-amino-acid chain; its full sequence is Urease accessory protein 2 (1208 aa).

Coiled coils occupy residues 187–362 and 400–469; these read RDKI…EKAA and IKAL…MHEQ. An SMC hinge domain is found at 523-633; that stretch reads DGVFGPLYDL…ICEDLQTAAH (111 aa). Coiled-coil stretches lie at residues 688–771 and 817–903; these read HIEV…YEEE and NRLE…VQTQ. Residues 748–773 form a disordered region; sequence ESSLEEAEGASRDAKAKRASYEEELR. A compositionally biased stretch (basic and acidic residues) spans 756-773; it reads GASRDAKAKRASYEEELR.

The protein belongs to the SMC family. SMC3 subfamily. Component of cohesin complexes.

The protein localises to the nucleus. Its function is as follows. Central component of cohesin, a complex required for chromosome cohesion during the cell cycle. The cohesin complex may form a large proteinaceous ring within which sister chromatids can be trapped. At anaphase, the complex is cleaved and dissociates from chromatin, allowing sister chromatids to segregate. Cohesion is coupled to DNA replication and is involved in DNA repair. The cohesin complex also plays an important role in spindle pole assembly during mitosis and in chromosomes movement. Is unrelated to urease function in C.neoformans. This is Urease accessory protein 2 from Cryptococcus neoformans var. grubii serotype A (strain H99 / ATCC 208821 / CBS 10515 / FGSC 9487) (Filobasidiella neoformans var. grubii).